Reading from the N-terminus, the 161-residue chain is Type-1 angiotensin II receptor-associated protein (161 aa).

Over 1 to 26 (MELPAVNLKVILLVHWLLTTWGCLVF) the chain is Extracellular. The helical transmembrane segment at 27–47 (SSSYAWGNFTILALGVWAVAQ) threads the bilayer. The Cytoplasmic portion of the chain corresponds to 48–53 (RDSIDA). The chain crosses the membrane as a helical span at residues 54–74 (IGMFLGGLVATIFLDIIYISI). Over 75–86 (FYSSVATGDTGR) the chain is Extracellular. Residues 87 to 107 (FGAGMAILSLLLKPFSCCLVY) traverse the membrane as a helical segment. The Cytoplasmic segment spans residues 108–161 (HMHRERGGELPLRPDFFGPSQEHSAYQTIDSSSDAAADPFASLENKGQAVPRGY). The segment at 110–122 (HRERGGELPLRPD) is interaction with AGTR1. Serine 127 carries the post-translational modification Phosphoserine. Threonine 135 is modified (phosphothreonine). Position 138 is a phosphoserine (serine 138).

As to quaternary structure, interacts with RACK1, and with the C-terminal region of AGTR1. Ubiquitous but more abundant in kidney, testis and heart.

The protein localises to the endoplasmic reticulum membrane. Its subcellular location is the golgi apparatus membrane. The protein resides in the cytoplasmic vesicle membrane. Its function is as follows. Appears to be a negative regulator of type-1 angiotensin II receptor-mediated signaling by regulating receptor internalization as well as mechanism of receptor desensitization such as phosphorylation. Also induces a decrease in angiotensin II-stimulated transcriptional activity. May play a role of negative regulator in cardiomyocyte hypertrophy induced by angiotensin II through an inhibition of p38 mitogen-activated protein kinase pathway. The chain is Type-1 angiotensin II receptor-associated protein (Agtrap) from Mus musculus (Mouse).